A 421-amino-acid chain; its full sequence is Serine--tRNA ligase (421 aa).

229–231 serves as a coordination point for L-serine; it reads TAE. 260–262 is a binding site for ATP; sequence RSE. Glutamate 283 serves as a coordination point for L-serine. Residue 347–350 participates in ATP binding; that stretch reads EISS. Serine 382 provides a ligand contact to L-serine.

The protein belongs to the class-II aminoacyl-tRNA synthetase family. Type-1 seryl-tRNA synthetase subfamily. Homodimer. The tRNA molecule binds across the dimer.

The protein localises to the cytoplasm. It catalyses the reaction tRNA(Ser) + L-serine + ATP = L-seryl-tRNA(Ser) + AMP + diphosphate + H(+). It carries out the reaction tRNA(Sec) + L-serine + ATP = L-seryl-tRNA(Sec) + AMP + diphosphate + H(+). It functions in the pathway aminoacyl-tRNA biosynthesis; selenocysteinyl-tRNA(Sec) biosynthesis; L-seryl-tRNA(Sec) from L-serine and tRNA(Sec): step 1/1. Functionally, catalyzes the attachment of serine to tRNA(Ser). Is also able to aminoacylate tRNA(Sec) with serine, to form the misacylated tRNA L-seryl-tRNA(Sec), which will be further converted into selenocysteinyl-tRNA(Sec). The sequence is that of Serine--tRNA ligase from Symbiobacterium thermophilum (strain DSM 24528 / JCM 14929 / IAM 14863 / T).